Here is a 315-residue protein sequence, read N- to C-terminus: uncharacterized protein (315 aa).

This is an uncharacterized protein from Caenorhabditis elegans.